The chain runs to 187 residues: NADH-quinone oxidoreductase subunit B (187 aa).

[4Fe-4S] cluster contacts are provided by Cys-55, Cys-56, Cys-121, and Cys-150.

The protein belongs to the complex I 20 kDa subunit family. NDH-1 is composed of 14 different subunits. Subunits NuoB, C, D, E, F, and G constitute the peripheral sector of the complex. The cofactor is [4Fe-4S] cluster.

Its subcellular location is the cell inner membrane. It catalyses the reaction a quinone + NADH + 5 H(+)(in) = a quinol + NAD(+) + 4 H(+)(out). Functionally, NDH-1 shuttles electrons from NADH, via FMN and iron-sulfur (Fe-S) centers, to quinones in the respiratory chain. The immediate electron acceptor for the enzyme in this species is believed to be ubiquinone. Couples the redox reaction to proton translocation (for every two electrons transferred, four hydrogen ions are translocated across the cytoplasmic membrane), and thus conserves the redox energy in a proton gradient. The polypeptide is NADH-quinone oxidoreductase subunit B (Bdellovibrio bacteriovorus (strain ATCC 15356 / DSM 50701 / NCIMB 9529 / HD100)).